A 174-amino-acid polypeptide reads, in one-letter code: FMN reductase (NADH) RutF (174 aa).

It belongs to the non-flavoprotein flavin reductase family. RutF subfamily.

The enzyme catalyses FMNH2 + NAD(+) = FMN + NADH + 2 H(+). Catalyzes the reduction of FMN to FMNH2 which is used to reduce pyrimidine by RutA via the Rut pathway. In Stutzerimonas stutzeri (strain A1501) (Pseudomonas stutzeri), this protein is FMN reductase (NADH) RutF.